Here is a 95-residue protein sequence, read N- to C-terminus: Ferredoxin-4 (95 aa).

Residues 2 to 95 form the 2Fe-2S ferredoxin-type domain; it reads DKATLTFTDV…LGGAVKVRPA (94 aa). Residues C38, C43, C46, and C81 each coordinate [2Fe-2S] cluster.

It belongs to the 2Fe2S plant-type ferredoxin family. Requires [2Fe-2S] cluster as cofactor.

Ferredoxins are iron-sulfur proteins that transfer electrons in a wide variety of metabolic reactions. This ferredoxin is required for nitrogen fixation. This chain is Ferredoxin-4 (fdxC), found in Rhodobacter capsulatus (Rhodopseudomonas capsulata).